The primary structure comprises 408 residues: Exodeoxyribonuclease 7 large subunit (408 aa).

It belongs to the XseA family. Heterooligomer composed of large and small subunits.

The protein resides in the cytoplasm. The enzyme catalyses Exonucleolytic cleavage in either 5'- to 3'- or 3'- to 5'-direction to yield nucleoside 5'-phosphates.. In terms of biological role, bidirectionally degrades single-stranded DNA into large acid-insoluble oligonucleotides, which are then degraded further into small acid-soluble oligonucleotides. In Alkaliphilus oremlandii (strain OhILAs) (Clostridium oremlandii (strain OhILAs)), this protein is Exodeoxyribonuclease 7 large subunit.